The following is a 131-amino-acid chain: C-type natriuretic peptide 2 (131 aa).

An N-terminal signal peptide occupies residues Met-1–Gly-22. The propeptide occupies Arg-23–Arg-109. Cys-115 and Cys-131 form a disulfide bridge.

The protein belongs to the natriuretic peptide family. In terms of tissue distribution, expressed in brain and to a low extent in atrium.

It localises to the secreted. Exhibits natriuretic and vasodepressor activity. Has a cGMP-stimulating activity. The protein is C-type natriuretic peptide 2 of Oncorhynchus mykiss (Rainbow trout).